A 199-amino-acid polypeptide reads, in one-letter code: Transmembrane protein 223 (199 aa).

The Mitochondrial matrix segment spans residues 1 to 43 (MVASVPLRNVSHLLSVLRSQNVPRYLQNGVPRDVLLFRHERGR). A helical membrane pass occupies residues 44–64 (FFAILGLFCAGQGIFWTSLAV). Over 65 to 94 (AALSRPLSRVPAEAPNRSYQDLRSALWRYG) the chain is Mitochondrial intermembrane. The chain crosses the membrane as a helical span at residues 95-115 (LAVGCGTMGVLVLGAGLLYSL). The Mitochondrial matrix segment spans residues 116–199 (RSVRSVMLLA…DNTVGAYRSL (84 aa)).

Belongs to the TMEM223 family. As to quaternary structure, associates with the mitochondrial ribosome.

It localises to the mitochondrion inner membrane. In terms of biological role, mitochondrial ribosome-associated protein involved in the first steps of cytochrome c oxidase complex (complex IV) biogenesis. Stimulates the translation of MT-CO1 mRNA and is a constituent of early MT-CO1 assembly intermediates. The polypeptide is Transmembrane protein 223 (Mus musculus (Mouse)).